We begin with the raw amino-acid sequence, 485 residues long: Glutamyl-tRNA(Gln) amidotransferase subunit A (485 aa).

Active-site charge relay system residues include Lys78 and Ser153. The Acyl-ester intermediate role is filled by Ser177.

It belongs to the amidase family. GatA subfamily. In terms of assembly, heterotrimer of A, B and C subunits.

It catalyses the reaction L-glutamyl-tRNA(Gln) + L-glutamine + ATP + H2O = L-glutaminyl-tRNA(Gln) + L-glutamate + ADP + phosphate + H(+). Functionally, allows the formation of correctly charged Gln-tRNA(Gln) through the transamidation of misacylated Glu-tRNA(Gln) in organisms which lack glutaminyl-tRNA synthetase. The reaction takes place in the presence of glutamine and ATP through an activated gamma-phospho-Glu-tRNA(Gln). In Bacillus cereus (strain 03BB102), this protein is Glutamyl-tRNA(Gln) amidotransferase subunit A.